Reading from the N-terminus, the 271-residue chain is Methyltransferase psoC (271 aa).

The protein belongs to the methyltransferase superfamily. LaeA methyltransferase family.

Its pathway is secondary metabolite biosynthesis. Its function is as follows. Methyltransferase; part of the gene cluster that mediates the biosynthesis of pseurotin A, a competitive inhibitor of chitin synthase and an inducer of nerve-cell proliferation. The PKS-NRPS hybrid synthetase psoA is responsible for the biosynthesis of azaspirene, one of the first intermediates having the 1-oxa-7-azaspiro[4,4]-non-2-ene-4,6-dione core of pseurotin, via condensation of one acetyl-CoA, 4 malonyl-CoA, and a L-phenylalanine molecule. The dual-functional monooxygenase/methyltransferase psoF seems to be involved in the addition of the C3 methyl group onto the pseurotin scaffold. Azaspirene is then converted to synerazol through 4 steps including oxidation of C17 by the cytochrome P450 monooxygenase psoD, O-methylation of the hydroxy group of C8 by the methyltransferase psoC, and the trans-to-cis isomerization of the C13 olefin by the glutathione S-transferase psoE. The fourth step of synerazol production is performed by the dual-functional monooxygenase/methyltransferase psoF which seems to catalyze the epoxidation of the intermediate deepoxy-synerazol. Synerazol can be attacked by a water molecule nonenzymatically at two different positions to yield two diol products, pseurotin A and pseurotin D. This is Methyltransferase psoC from Aspergillus fumigatus (strain ATCC MYA-4609 / CBS 101355 / FGSC A1100 / Af293) (Neosartorya fumigata).